Here is a 506-residue protein sequence, read N- to C-terminus: Kynurenine 3-monooxygenase (506 aa).

Positions 153 to 175 are disordered; the sequence is QETSLLPGEESEKDKKQNTEDED. Positions 162–171 are enriched in basic and acidic residues; it reads ESEKDKKQNT.

The protein belongs to the aromatic-ring hydroxylase family. KMO subfamily. It depends on FAD as a cofactor.

It localises to the mitochondrion outer membrane. The enzyme catalyses L-kynurenine + NADPH + O2 + H(+) = 3-hydroxy-L-kynurenine + NADP(+) + H2O. It participates in cofactor biosynthesis; NAD(+) biosynthesis; quinolinate from L-kynurenine: step 1/3. In terms of biological role, catalyzes the hydroxylation of L-kynurenine (L-Kyn) to form 3-hydroxy-L-kynurenine (L-3OHKyn). Required for synthesis of quinolinic acid. The chain is Kynurenine 3-monooxygenase from Cryptococcus neoformans var. neoformans serotype D (strain B-3501A) (Filobasidiella neoformans).